The following is a 452-amino-acid chain: Exodeoxyribonuclease 7 large subunit (452 aa).

This sequence belongs to the XseA family. As to quaternary structure, heterooligomer composed of large and small subunits.

Its subcellular location is the cytoplasm. It catalyses the reaction Exonucleolytic cleavage in either 5'- to 3'- or 3'- to 5'-direction to yield nucleoside 5'-phosphates.. Bidirectionally degrades single-stranded DNA into large acid-insoluble oligonucleotides, which are then degraded further into small acid-soluble oligonucleotides. The chain is Exodeoxyribonuclease 7 large subunit from Bacillus anthracis (strain A0248).